The chain runs to 345 residues: Isocitrate/homoisocitrate dehydrogenase (345 aa).

69–71 is an NADH binding site; sequence TTT. Residues Arg-86, Arg-96, Arg-111, Tyr-118, Lys-163, and Asn-165 each contribute to the (2R,3S)-homoisocitrate site. Asn-165 contributes to the NADH binding site. Residues Asp-194, Asp-218, and Asp-222 each coordinate Mg(2+). NADH contacts are provided by residues 251–255 and Asn-263; that span reads GSAPD.

It belongs to the isocitrate and isopropylmalate dehydrogenases family. Mn(2+) serves as cofactor. It depends on Mg(2+) as a cofactor.

The catalysed reaction is D-threo-isocitrate + NAD(+) = 2-oxoglutarate + CO2 + NADH. It carries out the reaction (2R,3S)-homoisocitrate + NAD(+) = 2-oxoadipate + CO2 + NADH. The protein operates within amino-acid biosynthesis; L-lysine biosynthesis via AAA pathway; L-alpha-aminoadipate from 2-oxoglutarate: step 4/5. Catalyzes the NAD(+)-dependent oxidative decarboxylation of homoisocitrate to 2-oxoadipate (alpha-ketoadipate), and of isocitrate to 2-oxoglutarate, at near equal efficiency. May thus play a dual role in glutamate and lysine biosynthesis in vivo. Preferentially uses NAD over NADP. This is Isocitrate/homoisocitrate dehydrogenase from Pyrococcus horikoshii (strain ATCC 700860 / DSM 12428 / JCM 9974 / NBRC 100139 / OT-3).